The chain runs to 1002 residues: Protein SMAX1-LIKE 7 (1002 aa).

The 178-residue stretch at alanine 8–glutamine 185 folds into the Clp R domain. 2 repeat regions span residues leucine 12–leucine 86 and valine 103–glutamine 185. An EAR motif is present at residues leucine 854 to leucine 858.

This sequence belongs to the ClpA/ClpB family. As to quaternary structure, interacts with TPL/TPR in an EAR-motif dependent manner. Interacts with TPL, TPR1, TPR2 and TPR4. Interacts with MAX2 and TPR2. Interacts with D14. The interaction with D14 occurs in the presence of (2'R) stereoisomers of strigolactones, but not (2'S) stereoisomers. Post-translationally, ubiquitinated upon strigolactone treatment. Strigolactone, but not karrikin, triggers rapid SCF(MAX2)-dependent degradation. Expressed in axillary branches and roots. Detected in seedlings and leaves. Expressed in the primary rosette buds and expanding leaves of adult rosettes, the vasculature of the hypocotyls, cotyledons, and mature roots, and in the midvein and petioles of young leaves.

The protein resides in the nucleus. Its function is as follows. Probable component of a transcriptional corepressor complex involved in branching control. Regulates cotyledon expansion and lateral root growth, but not germination or hypocotyl elongation. Promotes auxin transport and PIN1 accumulation in the stem and represses BRC1/TCP18 expression in axillary buds. The protein is Protein SMAX1-LIKE 7 of Arabidopsis thaliana (Mouse-ear cress).